The following is a 217-amino-acid chain: Ribonuclease T (217 aa).

One can recognise an Exonuclease domain in the interval 20 to 195 (VVVDVETAGL…YDTERTAMLF (176 aa)). Mg(2+)-binding residues include D23, E25, H182, and D187. H182 (proton donor/acceptor) is an active-site residue.

The protein belongs to the RNase T family. In terms of assembly, homodimer. Mg(2+) serves as cofactor.

Its function is as follows. Trims short 3' overhangs of a variety of RNA species, leaving a one or two nucleotide 3' overhang. Responsible for the end-turnover of tRNA: specifically removes the terminal AMP residue from uncharged tRNA (tRNA-C-C-A). Also appears to be involved in tRNA biosynthesis. This Blochmanniella pennsylvanica (strain BPEN) protein is Ribonuclease T.